The following is a 95-amino-acid chain: uncharacterized protein (95 aa).

A helical membrane pass occupies residues Ile12–Ile32.

The protein resides in the cell membrane. This is an uncharacterized protein from Escherichia coli O157:H7.